A 1420-amino-acid chain; its full sequence is DNA-directed RNA polymerase subunit beta'' (1420 aa).

Residues Cys-220, Cys-295, Cys-302, and Cys-305 each contribute to the Zn(2+) site.

This sequence belongs to the RNA polymerase beta' chain family. RpoC2 subfamily. In terms of assembly, in plastids the minimal PEP RNA polymerase catalytic core is composed of four subunits: alpha, beta, beta', and beta''. When a (nuclear-encoded) sigma factor is associated with the core the holoenzyme is formed, which can initiate transcription. Zn(2+) serves as cofactor.

It is found in the plastid. The protein resides in the chloroplast. It catalyses the reaction RNA(n) + a ribonucleoside 5'-triphosphate = RNA(n+1) + diphosphate. In terms of biological role, DNA-dependent RNA polymerase catalyzes the transcription of DNA into RNA using the four ribonucleoside triphosphates as substrates. The chain is DNA-directed RNA polymerase subunit beta'' from Adiantum capillus-veneris (Maidenhair fern).